We begin with the raw amino-acid sequence, 55 residues long: MAKATDVRPKITLACVECKERNYITRKNRRNDPDRIELKKFCPRDGRHTIHRETR.

Belongs to the bacterial ribosomal protein bL33 family.

This is Large ribosomal subunit protein bL33B from Salinispora arenicola (strain CNS-205).